A 691-amino-acid chain; its full sequence is Protein 4.2 (691 aa).

A lipid anchor (N-myristoyl glycine) is attached at G2. Residues L31 to F39 form a band 3 binding region. Phosphoserine; by PKA is present on S248.

Belongs to the transglutaminase superfamily. Transglutaminase family. As to quaternary structure, component of the ankyrin-1 complex in the erythrocyte, composed of ANK1, RHCE, RHAG, SLC4A1, EPB42, GYPA, GYPB and AQP1. Interacts with SLC4A1 (via the cytoplasmic domain); this interaction is mediated by the SLC4A1 Band 3-I dimer. Interacts with ANK1 (via ANK 1-13 repeats). Interacts with AQP1 (via the C-terminal). Post-translationally, both cAMP-dependent kinase (CAPK) and another kinase present in the red-blood cells seem to be able to phosphorylate EPB42.

The protein localises to the cell membrane. It is found in the cytoplasm. Its subcellular location is the cytoskeleton. Functionally, component of the ankyrin-1 complex, a multiprotein complex involved in the stability and shape of the erythrocyte membrane. This chain is Protein 4.2, found in Homo sapiens (Human).